The chain runs to 99 residues: Integration host factor subunit alpha (99 aa).

This sequence belongs to the bacterial histone-like protein family. As to quaternary structure, heterodimer of an alpha and a beta chain.

Its function is as follows. This protein is one of the two subunits of integration host factor, a specific DNA-binding protein that functions in genetic recombination as well as in transcriptional and translational control. The polypeptide is Integration host factor subunit alpha (Alteromonas mediterranea (strain DSM 17117 / CIP 110805 / LMG 28347 / Deep ecotype)).